The following is a 160-amino-acid chain: Twist-related protein 2 (160 aa).

Residues methionine 1–glutamate 63 form a disordered region. Residues lysine 27–lysine 37 are compositionally biased toward basic residues. One can recognise a bHLH domain in the interval serine 66–leucine 117.

As to quaternary structure, efficient DNA binding requires dimerization with another bHLH protein. Forms a heterodimer with TCF3/E12. Also interacts with MEF2C. Expressed at low levels in sclerotome and dermatome of somites, and in limb buds at 10.5 dpc. Accumulates predominantly in dermatome, prevertebrae and derivatives of branchial arches by 13 dpc. Also expressed near surface of embryo and in chondrogenic cells. In adult, expressed at low levels in skin, bladder, uterus, aorta and heart.

The protein localises to the nucleus. Its subcellular location is the cytoplasm. Functionally, binds to the E-box consensus sequence 5'-CANNTG-3' as a heterodimer and inhibits transcriptional activation by MYOD1, MYOG, MEF2A and MEF2C. Also represses expression of pro-inflammatory cytokines such as TNFA and IL1B. Involved in postnatal glycogen storage and energy metabolism. Inhibits the premature or ectopic differentiation of preosteoblast cells during osteogenesis, possibly by changing the internal signal transduction response of osteoblasts to external growth factors. The chain is Twist-related protein 2 (Twist2) from Mus musculus (Mouse).